Reading from the N-terminus, the 280-residue chain is Transmembrane protein 45B (280 aa).

The next 7 membrane-spanning stretches (helical) occupy residues 7 to 27 (HALP…KYPL), 49 to 69 (LIEG…EQFV), 96 to 116 (MYLF…PLNL), 120 to 140 (LDRL…YYHV), 150 to 170 (IHSL…IEVF), 184 to 204 (LTIL…PLGG), and 216 to 236 (VMFI…IMAI).

The protein belongs to the TMEM45 family.

It localises to the membrane. This is Transmembrane protein 45B (tmem45b) from Xenopus tropicalis (Western clawed frog).